The primary structure comprises 475 residues: E3 ubiquitin-protein ligase TRIM62 (475 aa).

The RING-type zinc finger occupies 11–54; that stretch reads CSICLSIYQDPVSLGCEHYFCRRCITEHWVRQEAQGARDCPECR. A B box-type zinc finger spans residues 88–128; the sequence is RAARPCQAHDKVKLFCLTDRALLCFFCDEPALHEQHQVTGI. Cys93, His96, Cys114, and His120 together coordinate Zn(2+). Residues 121–241 are a coiled coil; sequence EQHQVTGIDD…LQERLAETDR (121 aa). Residues 277–475 form the B30.2/SPRY domain; it reads PLQYTIWKSL…QPLRINTVRI (199 aa).

This sequence belongs to the TRIM/RBCC family. In terms of assembly, interacts with the ubiquitin-conjugating enzyme, UBE2D2. Polyubiquitinated, autoubiquitinated in the presence of UBE2D2.

Its subcellular location is the cytoplasm. The catalysed reaction is S-ubiquitinyl-[E2 ubiquitin-conjugating enzyme]-L-cysteine + [acceptor protein]-L-lysine = [E2 ubiquitin-conjugating enzyme]-L-cysteine + N(6)-ubiquitinyl-[acceptor protein]-L-lysine.. Its pathway is protein modification; protein ubiquitination. Functionally, E3 ubiquitin ligase that plays a role in antifungal immunity by mediating 'Lys-27'-linked ubiquitination of CARD9 downstream of C-type lectin receptors; leading to CARD9 activation, followed by activation of NF-kappa-B and MAP kinase p38 pathways. E3 ubiquitin ligase activity is dependent on E2 ubiquitin-conjugating enzyme UBE2D2. The protein is E3 ubiquitin-protein ligase TRIM62 of Mus musculus (Mouse).